Here is a 209-residue protein sequence, read N- to C-terminus: PRA1 family protein B1 (209 aa).

Ala-2 is modified (N-acetylalanine). Helical transmembrane passes span 73-93 (LAYFKVNYVAIVSLVLAFSLF), 95-115 (HPLSLLVLIGLLGGWMFLYLF), 133-153 (ETLLALVLSTIVVVFMTSVGS), 154-174 (LLTSALMIGVAIVCVHGAFVV), and 185-205 (PANAGLLSFLGGSATSAAAAV).

Belongs to the PRA1 family. As to quaternary structure, can form homodimer. Interacts with PRA1B2, PRA1B3, PRA1B4, PRA1B5, PRA1B6 and PRA1E.

Its subcellular location is the endosome membrane. Functionally, may be involved in both secretory and endocytic intracellular trafficking in the endosomal/prevacuolar compartments. This is PRA1 family protein B1 (PRA1B1) from Arabidopsis thaliana (Mouse-ear cress).